Reading from the N-terminus, the 256-residue chain is Fat body protein 2 (256 aa).

Position 10–34 (10–34 (VYVGSFSGIGWQMMMQLMQKDIKMM)) interacts with NAD(+). Serine 138 is a binding site for substrate. Catalysis depends on tyrosine 151, which acts as the Proton acceptor.

It belongs to the short-chain dehydrogenases/reductases (SDR) family.

This chain is Fat body protein 2 (Fbp2), found in Drosophila melanogaster (Fruit fly).